We begin with the raw amino-acid sequence, 263 residues long: MLSRKLSPEQLVARRLKIRDWNHKIGAVVAPHYSPTLSIRNPAPPSQLSLPLLLSSGAHLGHSTSIWNPYTQPFIYGKREGIHIISLDQTMVYLRRAISVVRSIAKENGIILFIGTRNGQKDSVVAAAKRARGYHIFDRWLPGLLTNAREVQGKLGGSILCKDNRGKLIQTDKKPSYVFPDLMVILNPLENKSACLEAQKTHVPTIGIIDTDADPRMVTYPIPANDDSLRCTDLIAGLLSRVAEQEYQKANQAFEKDKFTLPL.

The transit peptide at 1–15 directs the protein to the mitochondrion; that stretch reads MLSRKLSPEQLVARR.

It belongs to the universal ribosomal protein uS2 family. As to quaternary structure, component of the mitochondrial small ribosomal subunit (mt-SSU). Mature yeast 74S mitochondrial ribosomes consist of a small (37S) and a large (54S) subunit. The 37S small subunit contains a 15S ribosomal RNA (15S mt-rRNA) and at least 32 different proteins. The 54S large subunit contains a 21S rRNA (21S mt-rRNA) and at least 45 different proteins.

Its subcellular location is the mitochondrion. Component of the mitochondrial ribosome (mitoribosome), a dedicated translation machinery responsible for the synthesis of mitochondrial genome-encoded proteins, including at least some of the essential transmembrane subunits of the mitochondrial respiratory chain. The mitoribosomes are attached to the mitochondrial inner membrane and translation products are cotranslationally integrated into the membrane. The sequence is that of Small ribosomal subunit protein uS2m from Schizosaccharomyces pombe (strain 972 / ATCC 24843) (Fission yeast).